The sequence spans 396 residues: Actin-related protein 6 (396 aa).

T2 is subject to N-acetylthreonine. K260 carries the N6-acetyllysine modification.

This sequence belongs to the actin family. ARP6 subfamily. As to quaternary structure, component of the chromatin-remodeling SRCAP complex composed of at least SRCAP, DMAP1, RUVBL1, RUVBL2, ACTL6A, YEATS4, ACTR6 and ZNHIT1. Interacts with CBX1, CBX3 and CBX5.

It is found in the cytoplasm. The protein resides in the cytoskeleton. The protein localises to the nucleus. It localises to the nucleolus. In terms of biological role, required for formation and/or maintenance of proper nucleolar structure and function. Plays a dual role in the regulation of ribosomal DNA (rDNA) transcription. In the presence of high glucose, maintains active rDNA transcription through H2A.Z deposition and under glucose starvation, is required for the repression of rDNA transcription, and this function may be independent of H2A.Z. The sequence is that of Actin-related protein 6 (Actr6) from Mus musculus (Mouse).